Reading from the N-terminus, the 529-residue chain is Basal body-orientation factor 1 (529 aa).

Positions 1–13 are enriched in basic residues; the sequence is MPSKGKDKKKGKS. The disordered stretch occupies residues 1 to 22; that stretch reads MPSKGKDKKKGKSRGKDTKKLI. Coiled-coil stretches lie at residues 55–198 and 271–361; these read DTSR…LKQE and IKEK…EVER. The disordered stretch occupies residues 510 to 529; that stretch reads GKVVLPTIPKGPQESDTGTF.

It belongs to the BBOF1 family. In terms of assembly, interacts with MNS1 and ODF2.

It localises to the cytoplasm. The protein localises to the cytoskeleton. Its subcellular location is the cilium basal body. The protein resides in the flagellum axoneme. Functionally, plays an essential role in sperm motility and male fertility by stabilizing the sperm flagellar axonemal structure. May be required for the stability of ODF2 and MANS1 proteins. Dispensable for the assembly and function of motile cilia. The chain is Basal body-orientation factor 1 from Macaca fascicularis (Crab-eating macaque).